Consider the following 153-residue polypeptide: Replicase large subunit (153 aa).

This sequence belongs to the tobamovirus RNA-directed RNA polymerase family.

The enzyme catalyses RNA(n) + a ribonucleoside 5'-triphosphate = RNA(n+1) + diphosphate. Its function is as follows. The replicase large subunit is an RNA-dependent RNA polymerase active in viral RNA replication. The chain is Replicase large subunit from Citrullus (Cucumber).